The primary structure comprises 448 residues: tRNA modification GTPase MnmE (448 aa).

Positions 25, 82, and 121 each coordinate (6S)-5-formyl-5,6,7,8-tetrahydrofolate. The 156-residue stretch at 217 to 372 (GLTTVIAGRP…LRQEIIRRAG (156 aa)) folds into the TrmE-type G domain. Position 227 (Asn227) interacts with K(+). GTP is bound by residues 227–232 (NVGKSS), 246–252 (TEIPGTT), 271–274 (DTAG), and 353–355 (SAR). Ser231 is a Mg(2+) binding site. Positions 246, 248, and 251 each coordinate K(+). Thr252 is a binding site for Mg(2+). Residue Lys448 coordinates (6S)-5-formyl-5,6,7,8-tetrahydrofolate.

The protein belongs to the TRAFAC class TrmE-Era-EngA-EngB-Septin-like GTPase superfamily. TrmE GTPase family. As to quaternary structure, homodimer. Heterotetramer of two MnmE and two MnmG subunits. K(+) serves as cofactor.

The protein localises to the cytoplasm. In terms of biological role, exhibits a very high intrinsic GTPase hydrolysis rate. Involved in the addition of a carboxymethylaminomethyl (cmnm) group at the wobble position (U34) of certain tRNAs, forming tRNA-cmnm(5)s(2)U34. The polypeptide is tRNA modification GTPase MnmE (Methylococcus capsulatus (strain ATCC 33009 / NCIMB 11132 / Bath)).